The chain runs to 146 residues: D-aminoacyl-tRNA deacylase (146 aa).

The Gly-cisPro motif, important for rejection of L-amino acids motif lies at glycine 137–proline 138.

The protein belongs to the DTD family. Homodimer.

Its subcellular location is the cytoplasm. The enzyme catalyses glycyl-tRNA(Ala) + H2O = tRNA(Ala) + glycine + H(+). It catalyses the reaction a D-aminoacyl-tRNA + H2O = a tRNA + a D-alpha-amino acid + H(+). In terms of biological role, an aminoacyl-tRNA editing enzyme that deacylates mischarged D-aminoacyl-tRNAs. Also deacylates mischarged glycyl-tRNA(Ala), protecting cells against glycine mischarging by AlaRS. Acts via tRNA-based rather than protein-based catalysis; rejects L-amino acids rather than detecting D-amino acids in the active site. By recycling D-aminoacyl-tRNA to D-amino acids and free tRNA molecules, this enzyme counteracts the toxicity associated with the formation of D-aminoacyl-tRNA entities in vivo and helps enforce protein L-homochirality. This Thermodesulfovibrio yellowstonii (strain ATCC 51303 / DSM 11347 / YP87) protein is D-aminoacyl-tRNA deacylase.